A 311-amino-acid polypeptide reads, in one-letter code: tRNA dimethylallyltransferase (311 aa).

ATP is bound at residue Gly-13–Thr-20. Substrate is bound at residue Thr-15 to Thr-20. Interaction with substrate tRNA regions lie at residues Asp-38–Gln-41 and Gln-166–Arg-170.

It belongs to the IPP transferase family. As to quaternary structure, monomer. Mg(2+) serves as cofactor.

It carries out the reaction adenosine(37) in tRNA + dimethylallyl diphosphate = N(6)-dimethylallyladenosine(37) in tRNA + diphosphate. In terms of biological role, catalyzes the transfer of a dimethylallyl group onto the adenine at position 37 in tRNAs that read codons beginning with uridine, leading to the formation of N6-(dimethylallyl)adenosine (i(6)A). The sequence is that of tRNA dimethylallyltransferase from Staphylococcus aureus (strain bovine RF122 / ET3-1).